The sequence spans 3075 residues: Laminin subunit alpha-1 (3075 aa).

A signal peptide spans methionine 1 to cysteine 17. A Laminin N-terminal domain is found at arginine 18–methionine 269. Intrachain disulfides connect cysteine 270/cysteine 279, cysteine 272/cysteine 290, cysteine 292/cysteine 301, cysteine 304/cysteine 324, cysteine 327/cysteine 336, cysteine 329/cysteine 361, cysteine 364/cysteine 373, cysteine 376/cysteine 394, cysteine 397/cysteine 409, cysteine 399/cysteine 427, cysteine 429/cysteine 438, cysteine 441/cysteine 451, cysteine 454/cysteine 467, cysteine 456/cysteine 471, cysteine 473/cysteine 482, and cysteine 485/cysteine 500. 4 Laminin EGF-like domains span residues cysteine 270–alanine 326, cysteine 327–proline 396, cysteine 397–serine 453, and cysteine 454–glutamate 502. Positions cysteine 503 to cysteine 512 constitute a Laminin EGF-like 5; first part domain. Residues serine 516–histidine 708 enclose the Laminin IV type A 1 domain. N-linked (GlcNAc...) asparagine glycosylation is present at asparagine 665. A Laminin EGF-like 5; second part domain is found at cysteine 709–proline 741. Cystine bridges form between cysteine 742–cysteine 751, cysteine 744–cysteine 757, cysteine 760–cysteine 769, cysteine 772–cysteine 788, cysteine 791–cysteine 806, cysteine 793–cysteine 816, cysteine 819–cysteine 828, cysteine 831–cysteine 846, cysteine 849–cysteine 863, cysteine 851–cysteine 870, cysteine 873–cysteine 882, cysteine 885–cysteine 899, cysteine 902–cysteine 914, cysteine 904–cysteine 921, cysteine 923–cysteine 932, cysteine 935–cysteine 948, cysteine 951–cysteine 963, cysteine 953–cysteine 969, cysteine 971–cysteine 980, cysteine 983–cysteine 995, cysteine 998–cysteine 1007, cysteine 1000–cysteine 1014, cysteine 1016–cysteine 1025, cysteine 1028–cysteine 1041, cysteine 1044–cysteine 1056, cysteine 1046–cysteine 1063, cysteine 1065–cysteine 1074, cysteine 1077–cysteine 1087, cysteine 1090–cysteine 1102, cysteine 1092–cysteine 1118, cysteine 1120–cysteine 1129, and cysteine 1132–cysteine 1147. 8 Laminin EGF-like domains span residues cysteine 742–proline 790, cysteine 791–proline 848, cysteine 849–alanine 901, cysteine 902–proline 950, cysteine 951–proline 997, cysteine 998–alanine 1043, cysteine 1044–proline 1089, and cysteine 1090–proline 1149. One can recognise a Laminin EGF-like 14; first part domain in the interval cysteine 1150 to cysteine 1159. One can recognise a Laminin IV type A 2 domain in the interval valine 1170–asparagine 1361. The 41-residue stretch at cysteine 1362–proline 1402 folds into the Laminin EGF-like 14; second part domain. 12 disulfides stabilise this stretch: cysteine 1403-cysteine 1412, cysteine 1405-cysteine 1419, cysteine 1422-cysteine 1431, cysteine 1434-cysteine 1449, cysteine 1452-cysteine 1466, cysteine 1454-cysteine 1476, cysteine 1479-cysteine 1488, cysteine 1491-cysteine 1506, cysteine 1509-cysteine 1521, cysteine 1511-cysteine 1528, cysteine 1530-cysteine 1539, and cysteine 1542-cysteine 1553. Laminin EGF-like domains are found at residues cysteine 1403–leucine 1451, cysteine 1452–lysine 1508, and cysteine 1509–serine 1555. Residues cysteine 1556–isoleucine 2116 form a domain II and I region. 5 N-linked (GlcNAc...) asparagine glycosylation sites follow: asparagine 1579, asparagine 1689, asparagine 1717, asparagine 2047, and asparagine 2243. The stretch at methionine 1706–leucine 1783 forms a coiled coil. Laminin G-like domains lie at lysine 2117 to cysteine 2297, aspartate 2305 to cysteine 2481, isoleucine 2486 to cysteine 2673, alanine 2713 to cysteine 2885, and glutamine 2890 to cysteine 3070. Disulfide bonds link cysteine 2271-cysteine 2297 and cysteine 2457-cysteine 2481. Residues arginine 2534 to aspartate 2536 carry the Cell attachment site motif. 3 cysteine pairs are disulfide-bonded: cysteine 2646–cysteine 2673, cysteine 2860–cysteine 2885, and cysteine 3039–cysteine 3070.

In terms of assembly, laminin is a complex glycoprotein, consisting of three different polypeptide chains (alpha, beta, gamma), which are bound to each other by disulfide bonds into a cross-shaped molecule comprising one long and three short arms with globules at each end. Alpha-1 is a subunit of laminin-1 (laminin-111 or EHS laminin) and laminin-3 (laminin-121 or S-laminin). Tyrosine phosphorylated by PKDCC/VLK.

The protein localises to the secreted. It localises to the extracellular space. The protein resides in the extracellular matrix. Its subcellular location is the basement membrane. Binding to cells via a high affinity receptor, laminin is thought to mediate the attachment, migration and organization of cells into tissues during embryonic development by interacting with other extracellular matrix components. This Homo sapiens (Human) protein is Laminin subunit alpha-1 (LAMA1).